The primary structure comprises 424 residues: MESAPSGGLLALIIISIILLACISAVVSAYETAITSITSYKWSNYVKTHNKQKKLTTKIVNHFQKNYSACLITILVANNIVAILVSNILFLALDQSIKNPAISSALNLLISGVLLLMLCEITPKTLARINIIRVLVYFAVVVYFFYILFWPITKLASIIFAKYEKAPPVSRRDVYFFIDEIEQNGLFTKEDGQLIKRTLIFDQVLVDQIMIKWNRVVYCYEGDPVKTIKEKFLHGQFSRMPVLDQTSNEVVGFIHLKDLFSSLEKSNEPFVLQELLYPAVLVSNTTPIKQALRQMRLHRAHLAVVQDKHHHTIGIVSMEDIIEELVGEIYDEHDEVEAVQTLDNNTWLVLPNVKAAFFFNKWIKRDLVKSKNMTIQRYLASFENDGLNTQNKLETPWFIAEAIVDSENPEQIRYEIRKKSDVVD.

The CNNM transmembrane domain occupies 6 to 191; sequence SGGLLALIII…EQNGLFTKED (186 aa). Transmembrane regions (helical) follow at residues 7 to 27, 71 to 91, 101 to 121, and 135 to 155; these read GGLL…SAVV, LITI…ILFL, AISS…LCEI, and LVYF…ITKL. CBS domains follow at residues 210 to 270 and 275 to 335; these read MIKW…NEPF and LLYP…EHDE.

This sequence belongs to the UPF0053 family.

It localises to the cell membrane. In Mycoplasma pneumoniae (strain ATCC 29342 / M129 / Subtype 1) (Mycoplasmoides pneumoniae), this protein is UPF0053 protein MG146 homolog.